The primary structure comprises 519 residues: Alkaline phosphatase, tissue-nonspecific isozyme (519 aa).

The N-terminal stretch at 1–16 is a signal peptide; that stretch reads MKAFLLTLLAQLCSAS. D59 contacts Mg(2+). Zn(2+) is bound by residues D59 and S109. Catalysis depends on S109, which acts as the Phosphoserine intermediate. A disulfide bond links C138 and C200. N139 is a glycosylation site (N-linked (GlcNAc...) asparagine). T172 contributes to the Mg(2+) binding site. The N-linked (GlcNAc...) asparagine glycan is linked to N229. Residue E234 coordinates Ca(2+). A glycan (N-linked (GlcNAc...) asparagine) is linked at N278. The Ca(2+) site is built by F289 and E290. N302 is a glycosylation site (N-linked (GlcNAc...) asparagine). D305 provides a ligand contact to Ca(2+). E331 is a binding site for Mg(2+). D336, H340, D377, and H378 together coordinate Zn(2+). An N-linked (GlcNAc...) asparagine glycan is attached at N429. Zn(2+) is bound at residue H453. A disulfide bond links C488 and C496. S498 is lipidated: GPI-anchor amidated serine. The propeptide at 499 to 519 is removed in mature form; it reads AARPAATATLLPVLLLLLLLC.

It belongs to the alkaline phosphatase family. As to quaternary structure, homodimer. The cofactor is Mg(2+). Zn(2+) is required as a cofactor. It depends on Ca(2+) as a cofactor.

It localises to the cell membrane. The protein localises to the extracellular vesicle membrane. It carries out the reaction a phosphate monoester + H2O = an alcohol + phosphate. It catalyses the reaction diphosphate + H2O = 2 phosphate + H(+). The catalysed reaction is pyridoxal 5'-phosphate + H2O = pyridoxal + phosphate. The enzyme catalyses phosphoethanolamine + H2O = ethanolamine + phosphate. It carries out the reaction ATP + H2O = ADP + phosphate + H(+). It catalyses the reaction ADP + H2O = AMP + phosphate + H(+). The catalysed reaction is AMP + H2O = adenosine + phosphate. Alkaline phosphatase that metabolizes various phosphate compounds and plays a key role in skeletal mineralization and adaptive thermogenesis. Has broad substrate specificity and can hydrolyze a considerable variety of compounds: however, only a few substrates, such as diphosphate (inorganic pyrophosphate; PPi) and pyridoxal 5'-phosphate (PLP) are natural substrates. Plays an essential role in skeletal and dental mineralization via its ability to hydrolyze extracellular diphosphate, a potent mineralization inhibitor, to phosphate: it thereby promotes hydroxyapatite crystal formation and increases inorganic phosphate concentration. Catalyzes dephosphorylation of PLP to pyridoxal (PL), the transportable form of vitamin B6, in order to provide a sufficient amount of PLP in the brain, an essential cofactor for enzymes catalyzing the synthesis of diverse neurotransmitters. Additionally, also able to mediate ATP degradation in a stepwise manner to adenosine, thereby regulating the availability of ligands for purinergic receptors. Involved in the establishment and growth of feather germs. In Gallus gallus (Chicken), this protein is Alkaline phosphatase, tissue-nonspecific isozyme (ALPL).